The chain runs to 479 residues: MSNSALQVYGGDEITAVVIDPGSFTTNIGYSGTDCPQAILPSCYGKYTEGEKDELFSEQSIGLPRKDYEIHNIVQNGEVVDWEKAEKQWDWAIRSELRFETNSGMPALLTEPIWNSEENRKKSLEVLLESMDFSACYLVPTATAVSFAMGRPTCLVVDIGHDVTSVCPVVDGMTLSKSSMRSYIAGSLLNELIRSQLAPRKVIPLFQVAQRRPVFMERKFDYEIHPSLQKFVNERQFFQEFKETMLQVAPTSISKFKSEIETTSKRSIEAPWGEELVYDSLQRLEFAEQLFTPDLSQFPEDWPISKDGVVETWHNDYVPLKRNKPGTNVKDKEGTLDATPVPDENSVTSADQPNDNGKRNLEETTPDQKNEVSGLADLIYSSIMSTDVDLRTTLSHNVVITGGTSSLPGLMDRISAELNRSLPALKFRMLTSGQLRERQYQGWLGGSILASLGTFHQLWVGKQEYAEVGADRLLKDRFR.

The segment at 320-370 (LKRNKPGTNVKDKEGTLDATPVPDENSVTSADQPNDNGKRNLEETTPDQKN) is disordered. Positions 345–355 (NSVTSADQPND) are enriched in polar residues. Basic and acidic residues predominate over residues 356 to 370 (NGKRNLEETTPDQKN).

This sequence belongs to the actin family. ARP4 subfamily. In terms of assembly, component of the NuA4 histone acetyltransferase complex, of the INO80 chromatin remodeling complex, and of the SWR1 chromatin remodeling complex.

The protein localises to the nucleus. Functionally, chromatin interaction component of the NuA4 histone acetyltransferase complex which is involved in transcriptional activation of selected genes principally by acetylation of nucleosomal histone H4 and H2A. The NuA4 complex is also involved in DNA repair. Is required for NuA4 complex integrity. Component of the SWR1 complex which mediates the ATP-dependent exchange of histone H2A for the H2A variant HZT1 leading to transcriptional regulation of selected genes by chromatin remodeling. Component of the INO80 complex which remodels chromatin by shifting nucleosomes and is involved in DNA repair. The polypeptide is Actin-related protein 4 (ARP4) (Eremothecium gossypii (strain ATCC 10895 / CBS 109.51 / FGSC 9923 / NRRL Y-1056) (Yeast)).